A 29-amino-acid chain; its full sequence is Chassatide C1 (29 aa).

A cross-link (cyclopeptide (Gly-Asn)) is located at residues 1-29; it reads GDACGETCFTGICFTAGCSCNPWPTCTRN. Cystine bridges form between Cys-4–Cys-18, Cys-8–Cys-20, and Cys-13–Cys-26.

Post-translationally, this is a cyclic peptide. Expressed in leaf, fruit, pedical and stem but not in root (at protein level).

In terms of biological role, probably participates in a plant defense mechanism. This is Chassatide C1 from Chassalia chartacea (Chassalia curviflora).